We begin with the raw amino-acid sequence, 601 residues long: Sulfite reductase [NADPH] flavoprotein alpha-component (601 aa).

Positions 64-202 (ITLISASQTG…AAQEWRARVV (139 aa)) constitute a Flavodoxin-like domain. FMN-binding positions include 70–75 (SQTGNA), 117–120 (STQG), and 153–162 (LGDTSYEFFC). The 215-residue stretch at 236–450 (EAPLSASLAV…IEHNDNFRLP (215 aa)) folds into the FAD-binding FR-type domain. Residues threonine 324, alanine 358, 388 to 391 (RLYS), 406 to 408 (TVG), tyrosine 412, and 421 to 424 (GGAS) each bind FAD. NADP(+)-binding positions include 521-522 (SR), 527-531 (KIYVQ), and aspartate 563. Tyrosine 601 provides a ligand contact to FAD.

This sequence belongs to the NADPH-dependent sulphite reductase flavoprotein subunit CysJ family. It in the N-terminal section; belongs to the flavodoxin family. In the C-terminal section; belongs to the flavoprotein pyridine nucleotide cytochrome reductase family. Alpha(8)-beta(8). The alpha component is a flavoprotein, the beta component is a hemoprotein. The cofactor is FAD. Requires FMN as cofactor.

The enzyme catalyses hydrogen sulfide + 3 NADP(+) + 3 H2O = sulfite + 3 NADPH + 4 H(+). It participates in sulfur metabolism; hydrogen sulfide biosynthesis; hydrogen sulfide from sulfite (NADPH route): step 1/1. Component of the sulfite reductase complex that catalyzes the 6-electron reduction of sulfite to sulfide. This is one of several activities required for the biosynthesis of L-cysteine from sulfate. The flavoprotein component catalyzes the electron flow from NADPH -&gt; FAD -&gt; FMN to the hemoprotein component. The sequence is that of Sulfite reductase [NADPH] flavoprotein alpha-component from Citrobacter koseri (strain ATCC BAA-895 / CDC 4225-83 / SGSC4696).